A 160-amino-acid chain; its full sequence is Large ribosomal subunit protein uL10 (160 aa).

The protein belongs to the universal ribosomal protein uL10 family. Part of the ribosomal stalk of the 50S ribosomal subunit. The N-terminus interacts with L11 and the large rRNA to form the base of the stalk. The C-terminus forms an elongated spine to which L12 dimers bind in a sequential fashion forming a multimeric L10(L12)X complex.

Functionally, forms part of the ribosomal stalk, playing a central role in the interaction of the ribosome with GTP-bound translation factors. This chain is Large ribosomal subunit protein uL10, found in Ehrlichia canis (strain Jake).